The sequence spans 765 residues: Leucine-rich repeat and calponin homology domain-containing protein 2 (765 aa).

2 disordered regions span residues 1–39 (MAASQGGGGNSGGGGCGGGGSSGGCGTAGGGGGGAGGGG) and 55–76 (LFGQPFPNGPPWNPGSLQPQHT). LRR repeat units lie at residues 89 to 110 (SSGILSLSGRKLRDFPGSGYDL), 112 to 133 (DTTQADLSRNRFTEIPSDVWLF), 135 to 156 (PLETLNLYHNCIKTIPEAIKNL), 158 to 179 (MLTYLNISRNLLSTLPKYLFDL), 180 to 201 (PLKVLVVSNNKLVSIPEEIGKL), 203 to 224 (DLMELDISCNEIQVLPQQMGKL), 226 to 248 (SLRELNIRRNNLHVLPDELGDLP), 249 to 269 (LVKLDFSCNKVTEIPVCYRKL), and 271 to 292 (HLQVIILDNNPLQVPPAQICLK). The tract at residues 316-401 (LDLPSLSKRM…GSKTDSQKDQ (86 aa)) is disordered. Basic and acidic residues predominate over residues 378 to 388 (SNREQTSRNDS). Residues 438–472 (SEKSRKNEELGDEKRLEKEQLLAEEEDDDLKEVTD) adopt a coiled-coil conformation. Disordered stretches follow at residues 498–552 (RNKP…QSEE) and 565–628 (KYKS…EYGA). Basic and acidic residues predominate over residues 503 to 512 (QTVECEKSVS). 2 stretches are compositionally biased toward polar residues: residues 518–529 (SPLSPLTWQPLE) and 584–595 (DNANMSTQSPVS). Residues 642–755 (LREEREQIRQ…VTVQALLELP (114 aa)) enclose the Calponin-homology (CH) domain.

In terms of biological role, may play a role in the organization of the cytoskeleton. The chain is Leucine-rich repeat and calponin homology domain-containing protein 2 (LRCH2) from Homo sapiens (Human).